The primary structure comprises 615 residues: Granule-bound starch synthase 1, chloroplastic/amyloplastic (615 aa).

A chloroplast-targeting transit peptide spans 1–70; sequence MAALVTSQLA…DRRCLSMVVR (70 aa). Lys91 lines the ADP-alpha-D-glucose pocket.

The protein belongs to the glycosyltransferase 1 family. Bacterial/plant glycogen synthase subfamily. As to expression, found in seeds and pollen.

Its subcellular location is the plastid. It is found in the chloroplast. It localises to the amyloplast. The enzyme catalyses an NDP-alpha-D-glucose + [(1-&gt;4)-alpha-D-glucosyl](n) = [(1-&gt;4)-alpha-D-glucosyl](n+1) + a ribonucleoside 5'-diphosphate + H(+). It functions in the pathway glycan biosynthesis; starch biosynthesis. This chain is Granule-bound starch synthase 1, chloroplastic/amyloplastic (WAXY), found in Triticum aestivum (Wheat).